Here is a 370-residue protein sequence, read N- to C-terminus: Queuine tRNA-ribosyltransferase (370 aa).

Asp89 serves as the catalytic Proton acceptor. Residues 89–93 (DSGGF), Asp143, Gln185, and Gly212 each bind substrate. The interval 243–249 (GVGKPED) is RNA binding. Asp262 acts as the Nucleophile in catalysis. The segment at 267-271 (TRNAR) is RNA binding; important for wobble base 34 recognition. The Zn(2+) site is built by Cys300, Cys302, Cys305, and His331.

It belongs to the queuine tRNA-ribosyltransferase family. As to quaternary structure, homodimer. Within each dimer, one monomer is responsible for RNA recognition and catalysis, while the other monomer binds to the replacement base PreQ1. Zn(2+) is required as a cofactor.

The catalysed reaction is 7-aminomethyl-7-carbaguanine + guanosine(34) in tRNA = 7-aminomethyl-7-carbaguanosine(34) in tRNA + guanine. It functions in the pathway tRNA modification; tRNA-queuosine biosynthesis. Functionally, catalyzes the base-exchange of a guanine (G) residue with the queuine precursor 7-aminomethyl-7-deazaguanine (PreQ1) at position 34 (anticodon wobble position) in tRNAs with GU(N) anticodons (tRNA-Asp, -Asn, -His and -Tyr). Catalysis occurs through a double-displacement mechanism. The nucleophile active site attacks the C1' of nucleotide 34 to detach the guanine base from the RNA, forming a covalent enzyme-RNA intermediate. The proton acceptor active site deprotonates the incoming PreQ1, allowing a nucleophilic attack on the C1' of the ribose to form the product. After dissociation, two additional enzymatic reactions on the tRNA convert PreQ1 to queuine (Q), resulting in the hypermodified nucleoside queuosine (7-(((4,5-cis-dihydroxy-2-cyclopenten-1-yl)amino)methyl)-7-deazaguanosine). The polypeptide is Queuine tRNA-ribosyltransferase (Hydrogenovibrio crunogenus (strain DSM 25203 / XCL-2) (Thiomicrospira crunogena)).